The primary structure comprises 239 residues: 7-cyano-7-deazaguanine synthase (239 aa).

13–23 (LSGGLDSMVTA) is an ATP binding site. Zn(2+) is bound by residues Cys193, Cys203, Cys206, and Cys209.

Belongs to the QueC family. Requires Zn(2+) as cofactor.

The enzyme catalyses 7-carboxy-7-deazaguanine + NH4(+) + ATP = 7-cyano-7-deazaguanine + ADP + phosphate + H2O + H(+). Its pathway is purine metabolism; 7-cyano-7-deazaguanine biosynthesis. Functionally, catalyzes the ATP-dependent conversion of 7-carboxy-7-deazaguanine (CDG) to 7-cyano-7-deazaguanine (preQ(0)). The chain is 7-cyano-7-deazaguanine synthase from Erythrobacter litoralis (strain HTCC2594).